The following is a 762-amino-acid chain: Probable inorganic carbon transporter subunit DabA (762 aa).

Zn(2+) contacts are provided by C279, D281, H461, and C476.

It belongs to the inorganic carbon transporter (TC 9.A.2) DabA family. As to quaternary structure, forms a complex with DabB. Zn(2+) serves as cofactor.

Its subcellular location is the cell inner membrane. Part of an energy-coupled inorganic carbon pump. This Legionella pneumophila (strain Corby) protein is Probable inorganic carbon transporter subunit DabA.